We begin with the raw amino-acid sequence, 267 residues long: tRNA pseudouridine synthase A (267 aa).

The active-site Nucleophile is the aspartate 54. Tyrosine 112 contributes to the substrate binding site.

Belongs to the tRNA pseudouridine synthase TruA family. In terms of assembly, homodimer.

It carries out the reaction uridine(38/39/40) in tRNA = pseudouridine(38/39/40) in tRNA. Functionally, formation of pseudouridine at positions 38, 39 and 40 in the anticodon stem and loop of transfer RNAs. The protein is tRNA pseudouridine synthase A of Bordetella avium (strain 197N).